A 439-amino-acid chain; its full sequence is Probable N-acetylmuramidase (439 aa).

A signal peptide spans 1–57 (MPVSRIKVKNRHLKKKAKKPLAFYKPATKFAGAVLIAGTLTTTHELLLQQTSPMVQA). Disordered stretches follow at residues 218–241 (SAGTSNSGGSTATNTNNNSNTSST) and 287–320 (SSSSSNTNSSTSSGNSAGTTTPTTSVTPAKPASQ). A LysM 1 domain is found at 241 to 284 (TTYTVKSGDTLWGISQKYGISVAQIQSANNLKSTVIYIGQKLVL). The span at 287–319 (SSSSSNTNSSTSSGNSAGTTTPTTSVTPAKPAS) shows a compositional bias: low complexity. Residues 321–364 (TTIKVKSGDTLWGLSVKYKTTIAQLKSWNHLNSDTIFIGQNLIV) enclose the LysM 2 domain. The tract at residues 372-393 (SSSTGSSSASTSSTSNSSAASN) is disordered. The 44-residue stretch at 395–438 (SIHKVVKGDTLWGLSQKSGSPIASIKAWNHLSSDTILIGQYLRI) folds into the LysM 3 domain.

Belongs to the glycosyl hydrolase 73 family.

The protein resides in the secreted. The enzyme catalyses Hydrolysis of (1-&gt;4)-beta-linkages between N-acetylmuramic acid and N-acetyl-D-glucosamine residues in a peptidoglycan and between N-acetyl-D-glucosamine residues in chitodextrins.. Its function is as follows. Required for cell separation during growth. In Lactococcus lactis subsp. lactis (strain IL1403) (Streptococcus lactis), this protein is Probable N-acetylmuramidase (acmA).